The following is an 879-amino-acid chain: Pentatricopeptide repeat-containing protein At1g71210, mitochondrial (879 aa).

A mitochondrion-targeting transit peptide spans Met1–Phe44. PPR repeat units follow at residues Ser181–Leu215, Asp216–Arg246, Cys250–Asn280, Cys285–Asn319, Met320–Leu355, Glu356–Pro390, Asn391–Pro425, Thr426–Leu460, Gly461–Pro495, Lys496–Thr530, Ser531–Pro565, Thr566–Ser597, Lys602–Pro636, Thr637–Gln667, Lys671–Pro705, and Ser706–Ile740.

This sequence belongs to the PPR family. P subfamily.

Its subcellular location is the mitochondrion. The sequence is that of Pentatricopeptide repeat-containing protein At1g71210, mitochondrial from Arabidopsis thaliana (Mouse-ear cress).